Here is a 534-residue protein sequence, read N- to C-terminus: CTP synthase (534 aa).

Residues 1–269 (MHVSNSKFIF…DKIIIDAFRL (269 aa)) are amidoligase domain. Residue S17 coordinates CTP. S17 serves as a coordination point for UTP. Residue 18–23 (SLGKGV) coordinates ATP. Y58 serves as a coordination point for L-glutamine. D75 contributes to the ATP binding site. Mg(2+)-binding residues include D75 and E143. CTP-binding positions include 150-152 (DIE), 190-195 (KTKPTQ), and K226. UTP contacts are provided by residues 190–195 (KTKPTQ) and K226. In terms of domain architecture, Glutamine amidotransferase type-1 spans 294–532 (DIAIVGKYIK…IENAYIYKKE (239 aa)). G352 contributes to the L-glutamine binding site. Residue C379 is the Nucleophile; for glutamine hydrolysis of the active site. L-glutamine is bound by residues 380 to 383 (LGMQ), E403, and R460. Catalysis depends on residues H505 and E507.

The protein belongs to the CTP synthase family. Homotetramer.

The enzyme catalyses UTP + L-glutamine + ATP + H2O = CTP + L-glutamate + ADP + phosphate + 2 H(+). It carries out the reaction L-glutamine + H2O = L-glutamate + NH4(+). The catalysed reaction is UTP + NH4(+) + ATP = CTP + ADP + phosphate + 2 H(+). Its pathway is pyrimidine metabolism; CTP biosynthesis via de novo pathway; CTP from UDP: step 2/2. Its activity is regulated as follows. Allosterically activated by GTP, when glutamine is the substrate; GTP has no effect on the reaction when ammonia is the substrate. The allosteric effector GTP functions by stabilizing the protein conformation that binds the tetrahedral intermediate(s) formed during glutamine hydrolysis. Inhibited by the product CTP, via allosteric rather than competitive inhibition. Its function is as follows. Catalyzes the ATP-dependent amination of UTP to CTP with either L-glutamine or ammonia as the source of nitrogen. Regulates intracellular CTP levels through interactions with the four ribonucleotide triphosphates. The protein is CTP synthase of Hydrogenobaculum sp. (strain Y04AAS1).